The sequence spans 422 residues: Testin (422 aa).

Residues 92 to 199 (MILTNPVPAK…GDVKLPSEMD (108 aa)) enclose the PET domain. Disordered stretches follow at residues 135–162 (QPVAGSEGAQYRKKQLAKQLPAHDQDPS) and 194–226 (LPSEMDVKPGDRSSLDGGDRGTTAEVGAVEDKS). The segment covering 194 to 212 (LPSEMDVKPGDRSSLDGGD) has biased composition (basic and acidic residues). 3 LIM zinc-binding domains span residues 234-297 (YSCY…CDSE), 299-359 (PRCA…NHAV), and 362-422 (QGCH…MMMS).

Belongs to the prickle / espinas / testin family. Interacts via LIM domain 1 with ZYX. Interacts (via LIM domain 3) with ENAH and VASP. Interacts with ALKBH4, talin, actin, alpha-actinin, GRIP1 and PXN. Interacts (via LIM domain 2) with ACTL7A (via N-terminus). Heterodimer with ACTL7A; the heterodimer interacts with ENAH to form a heterotrimer.

Its subcellular location is the cytoplasm. It is found in the cell junction. It localises to the focal adhesion. Functionally, scaffold protein that may play a role in cell adhesion, cell spreading and in the reorganization of the actin cytoskeleton. Plays a role in the regulation of cell proliferation. May act as a tumor suppressor. The chain is Testin (TES) from Monodelphis domestica (Gray short-tailed opossum).